A 494-amino-acid chain; its full sequence is Guanosine-5'-triphosphate,3'-diphosphate pyrophosphatase (494 aa).

This sequence belongs to the GppA/Ppx family. GppA subfamily.

The catalysed reaction is guanosine 3'-diphosphate 5'-triphosphate + H2O = guanosine 3',5'-bis(diphosphate) + phosphate + H(+). Its pathway is purine metabolism; ppGpp biosynthesis; ppGpp from GTP: step 2/2. Catalyzes the conversion of pppGpp to ppGpp. Guanosine pentaphosphate (pppGpp) is a cytoplasmic signaling molecule which together with ppGpp controls the 'stringent response', an adaptive process that allows bacteria to respond to amino acid starvation, resulting in the coordinated regulation of numerous cellular activities. This Shigella flexneri protein is Guanosine-5'-triphosphate,3'-diphosphate pyrophosphatase.